The primary structure comprises 450 residues: 23S rRNA (uracil(1939)-C(5))-methyltransferase RlmD (450 aa).

The TRAM domain occupies 12–70; it reads SKQLSAKLSLSVNQLDHLGAGIAQHQGKVVFIPGALPDETVTVQLTEQKKNYARAKLIK. 4 residues coordinate [4Fe-4S] cluster: Cys83, Cys89, Cys92, and Cys171. Positions 283, 312, 317, 333, 360, and 380 each coordinate S-adenosyl-L-methionine. Cys406 serves as the catalytic Nucleophile.

It belongs to the class I-like SAM-binding methyltransferase superfamily. RNA M5U methyltransferase family. RlmD subfamily.

The catalysed reaction is uridine(1939) in 23S rRNA + S-adenosyl-L-methionine = 5-methyluridine(1939) in 23S rRNA + S-adenosyl-L-homocysteine + H(+). In terms of biological role, catalyzes the formation of 5-methyl-uridine at position 1939 (m5U1939) in 23S rRNA. The sequence is that of 23S rRNA (uracil(1939)-C(5))-methyltransferase RlmD from Shewanella baltica (strain OS223).